Consider the following 548-residue polypeptide: ETS domain-containing transcription factor ERF (548 aa).

Phosphothreonine is present on residues threonine 3 and threonine 7. Residues serine 20 and serine 24 each carry the phosphoserine modification. Positions 27–107 (IQLWHFILEL…KGKRFTYKFN (81 aa)) form a DNA-binding region, ETS. 3 disordered regions span residues 130 to 169 (QSAP…SSSS), 184 to 225 (GSVS…LARL), and 280 to 304 (SPTL…SHFS). Residues serine 185 and serine 190 each carry the phosphoserine modification. A compositionally biased stretch (gly residues) spans 289-301 (SGGGGPSGSGGGS). Serine 327 carries the post-translational modification Phosphoserine. Residues 342-478 (PQRPDKCPLP…GEAPGASQCM (137 aa)) form a disordered region. Positions 348–361 (CPLPPMAPETPPVP) are enriched in pro residues. 2 stretches are compositionally biased toward low complexity: residues 362–373 (SSASSSSSSSSS) and 394–403 (KAVAGADKSG). Phosphoserine occurs at positions 431 and 435. Acidic residues predominate over residues 431–451 (SEGESEEVEVTDISDEDEEDG). At threonine 441 the chain carries Phosphothreonine. A Phosphoserine modification is found at serine 444. Residues lysine 465, lysine 481, and lysine 512 each participate in a glycyl lysine isopeptide (Lys-Gly) (interchain with G-Cter in SUMO2) cross-link. Positions 492–548 (CRLEGGGGPAGGFEDEGEDKKVRGEGPGEAGGPLTPRRVSSDLQHATAQLSLEHRDS) are disordered. Threonine 526 carries the phosphothreonine; by MAPK1 modification. Phosphoserine occurs at positions 531, 532, and 548. Residues 532–541 (SDLQHATAQL) show a composition bias toward polar residues.

Belongs to the ETS family. Phosphorylated by multiple kinases including MAPK1/ERK2 at THR-526. Phosphorylation regulates the activity of ERF. In terms of tissue distribution, highest levels in testis, ovary, pancreas, and heart.

It is found in the nucleus. Functionally, potent transcriptional repressor that binds to the H1 element of the Ets2 promoter. May regulate other genes involved in cellular proliferation. Required for extraembryonic ectoderm differentiation, ectoplacental cone cavity closure, and chorioallantoic attachment. May be important for regulating trophoblast stem cell differentiation. The sequence is that of ETS domain-containing transcription factor ERF (ERF) from Homo sapiens (Human).